Consider the following 434-residue polypeptide: Glutamate-1-semialdehyde 2,1-aminomutase (434 aa).

The residue at position 267 (lysine 267) is an N6-(pyridoxal phosphate)lysine.

This sequence belongs to the class-III pyridoxal-phosphate-dependent aminotransferase family. HemL subfamily. As to quaternary structure, homodimer. It depends on pyridoxal 5'-phosphate as a cofactor.

The protein resides in the cytoplasm. The enzyme catalyses (S)-4-amino-5-oxopentanoate = 5-aminolevulinate. The protein operates within porphyrin-containing compound metabolism; protoporphyrin-IX biosynthesis; 5-aminolevulinate from L-glutamyl-tRNA(Glu): step 2/2. It functions in the pathway porphyrin-containing compound metabolism; chlorophyll biosynthesis. The sequence is that of Glutamate-1-semialdehyde 2,1-aminomutase from Roseiflexus castenholzii (strain DSM 13941 / HLO8).